The following is a 415-amino-acid chain: Gamma-glutamyl phosphate reductase (415 aa).

Belongs to the gamma-glutamyl phosphate reductase family.

The protein resides in the cytoplasm. It catalyses the reaction L-glutamate 5-semialdehyde + phosphate + NADP(+) = L-glutamyl 5-phosphate + NADPH + H(+). Its pathway is amino-acid biosynthesis; L-proline biosynthesis; L-glutamate 5-semialdehyde from L-glutamate: step 2/2. Its function is as follows. Catalyzes the NADPH-dependent reduction of L-glutamate 5-phosphate into L-glutamate 5-semialdehyde and phosphate. The product spontaneously undergoes cyclization to form 1-pyrroline-5-carboxylate. The protein is Gamma-glutamyl phosphate reductase of Listeria innocua serovar 6a (strain ATCC BAA-680 / CLIP 11262).